A 419-amino-acid chain; its full sequence is Phospho-N-acetylmuramoyl-pentapeptide-transferase (419 aa).

10 helical membrane-spanning segments follow: residues 22 to 42 (YVSFRSGLALILSLFISTAIG), 72 to 92 (TPTMGGIIIIIAILIPTLLCA), 94 to 114 (LNNIYVILMLVTTVWLGALGF), 135 to 155 (IVGQVGLGLIVGLVLFMSPDV), 210 to 230 (AAWLVFVLMVIFVVTAVSNGA), 238 to 258 (GLAAGTSAIIGVALGILAYMS), 266 to 286 (FLNIMFIPGAEELVVYAAAFI), 303 to 323 (FMGDTGSLTLGGIIAVFAIII), 327 to 347 (LLIPILCGIFLVENISVMLQV), and 396 to 416 (KIVVRFWLIGIILAVMTIVTL).

This sequence belongs to the glycosyltransferase 4 family. MraY subfamily. Mg(2+) serves as cofactor.

It localises to the cell inner membrane. It catalyses the reaction UDP-N-acetyl-alpha-D-muramoyl-L-alanyl-gamma-D-glutamyl-meso-2,6-diaminopimeloyl-D-alanyl-D-alanine + di-trans,octa-cis-undecaprenyl phosphate = di-trans,octa-cis-undecaprenyl diphospho-N-acetyl-alpha-D-muramoyl-L-alanyl-D-glutamyl-meso-2,6-diaminopimeloyl-D-alanyl-D-alanine + UMP. It participates in cell wall biogenesis; peptidoglycan biosynthesis. In terms of biological role, catalyzes the initial step of the lipid cycle reactions in the biosynthesis of the cell wall peptidoglycan: transfers peptidoglycan precursor phospho-MurNAc-pentapeptide from UDP-MurNAc-pentapeptide onto the lipid carrier undecaprenyl phosphate, yielding undecaprenyl-pyrophosphoryl-MurNAc-pentapeptide, known as lipid I. In Parabacteroides distasonis (strain ATCC 8503 / DSM 20701 / CIP 104284 / JCM 5825 / NCTC 11152), this protein is Phospho-N-acetylmuramoyl-pentapeptide-transferase.